A 659-amino-acid polypeptide reads, in one-letter code: Pentatricopeptide repeat-containing protein At3g48810 (659 aa).

PPR repeat units lie at residues 75–109, 110–144, 145–179, 180–214, 215–243, 245–279, 280–314, 315–350, 351–385, 386–420, 421–455, 456–490, 492–526, 527–561, 562–598, and 599–633; these read TPLT…GFHC, SEDL…GCDP, SVKI…GFEP, NVFT…GCCP, DAVS…ERFE, VVSV…GISP, NVIS…GCHP, NIYT…GLQP, NVVA…GCSP, NIRT…GCCP, NVVV…NCAP, SVPT…HRCP, NIVT…GVEW, SSST…GKSP, DEIT…KWRP, and DVIS…GIVP.

Belongs to the PPR family. P subfamily.

In Arabidopsis thaliana (Mouse-ear cress), this protein is Pentatricopeptide repeat-containing protein At3g48810.